A 282-amino-acid polypeptide reads, in one-letter code: Nucleotide-binding protein ABO_0549 (282 aa).

8-15 (GRSGSGKT) is a binding site for ATP. 59–62 (DARN) is a binding site for GTP.

Belongs to the RapZ-like family.

In terms of biological role, displays ATPase and GTPase activities. The protein is Nucleotide-binding protein ABO_0549 of Alcanivorax borkumensis (strain ATCC 700651 / DSM 11573 / NCIMB 13689 / SK2).